The following is a 96-amino-acid chain: uncharacterized protein (96 aa).

This sequence belongs to the NifU family.

This is an uncharacterized protein from Azotobacter vinelandii.